A 104-amino-acid polypeptide reads, in one-letter code: Integration host factor subunit alpha (104 aa).

Residues 51 to 70 (GNFQLRDKPQRPGRNPKTGE) are disordered.

This sequence belongs to the bacterial histone-like protein family. In terms of assembly, heterodimer of an alpha and a beta chain.

Functionally, this protein is one of the two subunits of integration host factor, a specific DNA-binding protein that functions in genetic recombination as well as in transcriptional and translational control. The sequence is that of Integration host factor subunit alpha from Ralstonia nicotianae (strain ATCC BAA-1114 / GMI1000) (Ralstonia solanacearum).